The sequence spans 53 residues: UPF0391 membrane protein YtjA (53 aa).

Transmembrane regions (helical) follow at residues 4–24 (WGII…GGLA) and 30–48 (AAKI…SLFM).

Belongs to the UPF0391 family.

The protein localises to the cell membrane. In Escherichia coli O6:K15:H31 (strain 536 / UPEC), this protein is UPF0391 membrane protein YtjA.